Reading from the N-terminus, the 230-residue chain is MEIRQIVYPGEKIDLEGQKPRNGLYEENDEYYSEYFGVVQKSDKFIDIVPFNGPYMPRINDKVIGKVIDVSATMWTVDINSPYFSLMHMNDTPWHVTSGDLRKYLNVGDYIYAKVSILNEIKESWLSLKDVNLRKLEEGSIIYIKAPKVPRVIGKAGNMINMIKSETNTKIIVGQNGLIWIDGEPENVDLAINAIGMVEKEAHTFGLTDRVKAYLDKMKGGNNGRSEVNQ.

Positions 60 to 129 constitute an S1 motif domain; sequence NDKVIGKVID…EIKESWLSLK (70 aa). One can recognise a KH domain in the interval 137–195; sequence EEGSIIYIKAPKVPRVIGKAGNMINMIKSETNTKIIVGQNGLIWIDGEPENVDLAINAI.

It belongs to the RRP4 family. As to quaternary structure, component of the archaeal exosome complex. Forms a trimer of Rrp4 and/or Csl4 subunits. The trimer associates with a hexameric ring-like arrangement composed of 3 Rrp41-Rrp42 heterodimers.

It is found in the cytoplasm. Functionally, non-catalytic component of the exosome, which is a complex involved in RNA degradation. Increases the RNA binding and the efficiency of RNA degradation. Confers strong poly(A) specificity to the exosome. The sequence is that of Exosome complex component Rrp4 from Picrophilus torridus (strain ATCC 700027 / DSM 9790 / JCM 10055 / NBRC 100828 / KAW 2/3).